The chain runs to 352 residues: uncharacterized protein (352 aa).

An N-terminal signal peptide occupies residues 1 to 21 (MNVDSRVFRFFLVFLILVVVA).

The protein belongs to the bacterial solute-binding protein 1 family. WtpA subfamily.

This is an uncharacterized protein from Methanosarcina acetivorans (strain ATCC 35395 / DSM 2834 / JCM 12185 / C2A).